The primary structure comprises 620 residues: Glutathione-regulated potassium-efflux system protein KefC (620 aa).

12 helical membrane-spanning segments follow: residues 4 to 24 (HTLV…PIAV), 26 to 46 (LGLG…LWGL), 54 to 74 (SILH…GLEL), 90 to 110 (GALQ…LLGL), 114 to 134 (VAEL…MQAM), 149 to 169 (FAVL…IPLL), 178 to 198 (MGAF…VVLL), 218 to 238 (VFSA…EEVG), 270 to 290 (GLLL…GTLI), 294 to 314 (LRIV…LWLI), 327 to 347 (WFAV…GAAQ), and 359 to 379 (SLTL…VILN). In terms of domain architecture, RCK N-terminal spans 399-518 (QPRVIIAGFG…AGVEKPERET (120 aa)). Residues 597 to 620 (GWQGTEEGKHTGNMADEPETKPSS) are disordered.

Belongs to the monovalent cation:proton antiporter 2 (CPA2) transporter (TC 2.A.37) family. KefC subfamily. As to quaternary structure, homodimer. Interacts with the regulatory subunit KefF.

It is found in the cell inner membrane. Its function is as follows. Pore-forming subunit of a potassium efflux system that confers protection against electrophiles. Catalyzes K(+)/H(+) antiport. This is Glutathione-regulated potassium-efflux system protein KefC from Shigella flexneri serotype 5b (strain 8401).